Consider the following 430-residue polypeptide: Enolase (430 aa).

Glutamine 165 provides a ligand contact to (2R)-2-phosphoglycerate. The active-site Proton donor is the glutamate 207. Mg(2+)-binding residues include aspartate 244, glutamate 287, and aspartate 314. 4 residues coordinate (2R)-2-phosphoglycerate: lysine 339, arginine 368, serine 369, and lysine 390. Catalysis depends on lysine 339, which acts as the Proton acceptor.

It belongs to the enolase family. Component of the RNA degradosome, a multiprotein complex involved in RNA processing and mRNA degradation. The cofactor is Mg(2+).

The protein resides in the cytoplasm. It localises to the secreted. Its subcellular location is the cell surface. It carries out the reaction (2R)-2-phosphoglycerate = phosphoenolpyruvate + H2O. Its pathway is carbohydrate degradation; glycolysis; pyruvate from D-glyceraldehyde 3-phosphate: step 4/5. Functionally, catalyzes the reversible conversion of 2-phosphoglycerate (2-PG) into phosphoenolpyruvate (PEP). It is essential for the degradation of carbohydrates via glycolysis. The chain is Enolase from Xanthomonas campestris pv. campestris (strain 8004).